A 249-amino-acid chain; its full sequence is Elongation factor Ts (249 aa).

An involved in Mg(2+) ion dislocation from EF-Tu region spans residues 82 to 85; sequence TDFV. Positions 215–249 are disordered; that stretch reads QAGQLAPEAESTTETADATSETTTEKSSAKKKKKK. The span at 222-236 shows a compositional bias: low complexity; sequence EAESTTETADATSET.

Belongs to the EF-Ts family.

The protein localises to the cytoplasm. Functionally, associates with the EF-Tu.GDP complex and induces the exchange of GDP to GTP. It remains bound to the aminoacyl-tRNA.EF-Tu.GTP complex up to the GTP hydrolysis stage on the ribosome. The protein is Elongation factor Ts of Rippkaea orientalis (strain PCC 8801 / RF-1) (Cyanothece sp. (strain PCC 8801)).